Reading from the N-terminus, the 481-residue chain is 2-succinylbenzoate--CoA ligase (481 aa).

It belongs to the ATP-dependent AMP-binding enzyme family. MenE subfamily.

The catalysed reaction is 2-succinylbenzoate + ATP + CoA = 2-succinylbenzoyl-CoA + AMP + diphosphate. It functions in the pathway quinol/quinone metabolism; 1,4-dihydroxy-2-naphthoate biosynthesis; 1,4-dihydroxy-2-naphthoate from chorismate: step 5/7. The protein operates within quinol/quinone metabolism; menaquinone biosynthesis. Functionally, converts 2-succinylbenzoate (OSB) to 2-succinylbenzoyl-CoA (OSB-CoA). The protein is 2-succinylbenzoate--CoA ligase of Bacillus mycoides (strain KBAB4) (Bacillus weihenstephanensis).